A 345-amino-acid chain; its full sequence is Biotin synthase (345 aa).

In terms of domain architecture, Radical SAM core spans 67 to 295 (YKVQLASLLS…KSRIRLSAGR (229 aa)). The [4Fe-4S] cluster site is built by cysteine 82, cysteine 86, and cysteine 89. The [2Fe-2S] cluster site is built by cysteine 126, cysteine 158, cysteine 218, and arginine 290.

This sequence belongs to the radical SAM superfamily. Biotin synthase family. As to quaternary structure, homodimer. It depends on [4Fe-4S] cluster as a cofactor. [2Fe-2S] cluster is required as a cofactor.

It catalyses the reaction (4R,5S)-dethiobiotin + (sulfur carrier)-SH + 2 reduced [2Fe-2S]-[ferredoxin] + 2 S-adenosyl-L-methionine = (sulfur carrier)-H + biotin + 2 5'-deoxyadenosine + 2 L-methionine + 2 oxidized [2Fe-2S]-[ferredoxin]. It participates in cofactor biosynthesis; biotin biosynthesis; biotin from 7,8-diaminononanoate: step 2/2. Catalyzes the conversion of dethiobiotin (DTB) to biotin by the insertion of a sulfur atom into dethiobiotin via a radical-based mechanism. The protein is Biotin synthase of Prochlorococcus marinus (strain NATL2A).